Reading from the N-terminus, the 437-residue chain is UDP-N-acetylmuramate--L-alanine ligase (437 aa).

ATP is bound at residue 108–114 (GAHGKTS).

Belongs to the MurCDEF family.

It localises to the cytoplasm. It carries out the reaction UDP-N-acetyl-alpha-D-muramate + L-alanine + ATP = UDP-N-acetyl-alpha-D-muramoyl-L-alanine + ADP + phosphate + H(+). Its pathway is cell wall biogenesis; peptidoglycan biosynthesis. Functionally, cell wall formation. The sequence is that of UDP-N-acetylmuramate--L-alanine ligase from Staphylococcus aureus.